Consider the following 299-residue polypeptide: F-actin-capping protein subunit alpha-3 (299 aa).

Phosphoserine is present on residues S2 and S290.

The protein belongs to the F-actin-capping protein alpha subunit family. As to quaternary structure, component of the F-actin capping complex, composed of a heterodimer of an alpha and a beta subunit. Component of the WASH complex, composed of F-actin-capping protein subunit alpha (CAPZA1, CAPZA2 or CAPZA3), F-actin-capping protein subunit beta (CAPZB), WASHC1, WASHC2, WASHC3, WASHC4 and WASHC5. In terms of tissue distribution, exclusively expressed in the testis.

The protein localises to the cytoplasm. It localises to the cytoskeleton. F-actin-capping proteins bind in a Ca(2+)-independent manner to the fast growing ends of actin filaments (barbed end) thereby blocking the exchange of subunits at these ends. Unlike other capping proteins (such as gelsolin and severin), these proteins do not sever actin filaments. May play a role in the morphogenesis of spermatid. In Rattus norvegicus (Rat), this protein is F-actin-capping protein subunit alpha-3 (Capza3).